A 103-amino-acid chain; its full sequence is NADH-quinone oxidoreductase subunit K (103 aa).

3 helical membrane-spanning segments follow: residues 5 to 25 (ISSY…GALT), 30 to 50 (VVVL…LVAF), and 66 to 86 (LFTM…LIAL).

This sequence belongs to the complex I subunit 4L family. As to quaternary structure, NDH-1 is composed of 14 different subunits. Subunits NuoA, H, J, K, L, M, N constitute the membrane sector of the complex.

It localises to the cell membrane. It carries out the reaction a quinone + NADH + 5 H(+)(in) = a quinol + NAD(+) + 4 H(+)(out). NDH-1 shuttles electrons from NADH, via FMN and iron-sulfur (Fe-S) centers, to quinones in the respiratory chain. The immediate electron acceptor for the enzyme in this species is believed to be a menaquinone. Couples the redox reaction to proton translocation (for every two electrons transferred, four hydrogen ions are translocated across the cytoplasmic membrane), and thus conserves the redox energy in a proton gradient. This Brevibacillus brevis (strain 47 / JCM 6285 / NBRC 100599) protein is NADH-quinone oxidoreductase subunit K.